Here is a 235-residue protein sequence, read N- to C-terminus: Thrombin-like enzyme bilineobin (235 aa).

Residues 1 to 227 enclose the Peptidase S1 domain; that stretch reads IIGGDECNIN…HLDWIQSIIA (227 aa). 6 cysteine pairs are disulfide-bonded: Cys7/Cys141, Cys28/Cys44, Cys78/Cys234, Cys120/Cys188, Cys152/Cys167, and Cys178/Cys203. The active-site Charge relay system is His43. 3 N-linked (GlcNAc...) asparagine glycosylation sites follow: Asn45, Asn57, and Asn81. The active-site Charge relay system is Asp88. 2 N-linked (GlcNAc...) asparagine glycosylation sites follow: Asn132 and Asn148. Ser182 acts as the Charge relay system in catalysis. A glycan (N-linked (GlcNAc...) asparagine) is linked at Asn229.

This sequence belongs to the peptidase S1 family. Snake venom subfamily. As to quaternary structure, monomer. In terms of processing, glycosylated. In terms of tissue distribution, expressed by the venom gland.

It is found in the secreted. With respect to regulation, not inhibited by hirudin. Functionally, thrombin-like snake venom serine protease that has coagulant activity by releasing fibrinopeptides A and B from fibrinogen alpha (FGA) and beta (FGB), with a preference for beta chain. The polypeptide is Thrombin-like enzyme bilineobin (Agkistrodon bilineatus (Cantil)).